Consider the following 147-residue polypeptide: uncharacterized protein (147 aa).

The 62-residue stretch at 2–63 folds into the HTH asnC-type domain; sequence LDELDKKIIG…KLNYENIGYD (62 aa). The segment at residues 21–40 is a DNA-binding region (H-T-H motif); the sequence is YREIAKELNVAVGTIYNRIK.

This is an uncharacterized protein from Pyrococcus abyssi (strain GE5 / Orsay).